A 156-amino-acid chain; its full sequence is tRNA-specific adenosine deaminase (156 aa).

In terms of domain architecture, CMP/dCMP-type deaminase spans 2–120 (TNDIYFMTLA…GSLMNLLQQS (119 aa)). Position 53 (His53) interacts with Zn(2+). Glu55 (proton donor) is an active-site residue. Zn(2+)-binding residues include Cys83 and Cys86.

It belongs to the cytidine and deoxycytidylate deaminase family. As to quaternary structure, homodimer. Zn(2+) serves as cofactor.

It carries out the reaction adenosine(34) in tRNA + H2O + H(+) = inosine(34) in tRNA + NH4(+). Its function is as follows. Catalyzes the deamination of adenosine to inosine at the wobble position 34 of tRNA(Arg2). The chain is tRNA-specific adenosine deaminase from Staphylococcus aureus (strain Mu50 / ATCC 700699).